The primary structure comprises 517 residues: Golgi-associated kinase 1B (517 aa).

Residues 1–36 (MTCPDKPGQLVNWFVCSLCAPRVCKLWSSRRPRTRR) are Cytoplasmic-facing. A helical; Signal-anchor for type II membrane protein membrane pass occupies residues 37–56 (NLLLGTACAIYLGFLVSQVG). The Extracellular portion of the chain corresponds to 57–517 (RGSFQHGQAT…HGARVLPMNE (461 aa)). Residues Asn98 and Asn287 are each glycosylated (N-linked (GlcNAc...) asparagine).

The protein belongs to the GASK family.

Its subcellular location is the golgi apparatus membrane. The protein is Golgi-associated kinase 1B of Mus musculus (Mouse).